Here is a 322-residue protein sequence, read N- to C-terminus: MASSQGKSELRYADWMSSLPDTLHGIPLTNLAIPGSHDSFSFYIDEASPVGPEQPETVQNFVSVFGTVAKKLMRKWLATQTMNFTSQLEAGIRFFDLRISTKPRDPDNELYFAHGLFSATVREGLEQISTFLASHAREVVFLDFNHFYGVQNLHHEKLVQMLRTVFGDRLCPVVFAQEVSLKYLWEKEYQVLVFYHNPMALEVPFLWPGQMMPAPWANTTDPEKLILFLQASVKDRRRKGTFFVSQVVLTPKASTVMKGVTSGLRETITERALPSMMQWIRSQRPGESGVNIITADFVELGEFISAVITLNYYLDDEEENAT.

Residues 22–197 (TLHGIPLTNL…EYQVLVFYHN (176 aa)) enclose the PI-PLC X-box domain. Active-site residues include His37 and His114.

The polypeptide is PI-PLC X domain-containing protein 3 (plcxd3) (Danio rerio (Zebrafish)).